The sequence spans 101 residues: Small ribosomal subunit protein bS18c (101 aa).

The segment covering 1 to 19 (MNKSKRPFTKSKRSFRRRL) has biased composition (basic residues). Residues 1-23 (MNKSKRPFTKSKRSFRRRLPPIQ) are disordered.

The protein belongs to the bacterial ribosomal protein bS18 family. As to quaternary structure, part of the 30S ribosomal subunit.

It localises to the plastid. It is found in the chloroplast. The protein is Small ribosomal subunit protein bS18c of Lobularia maritima (Sweet alyssum).